The chain runs to 177 residues: Bifunctional protein PyrR (177 aa).

A PRPP-binding motif is present at residues 99-111 (VVLVDDVLYTGRT).

The protein belongs to the purine/pyrimidine phosphoribosyltransferase family. PyrR subfamily.

It carries out the reaction UMP + diphosphate = 5-phospho-alpha-D-ribose 1-diphosphate + uracil. Its function is as follows. Regulates the transcription of the pyrimidine nucleotide (pyr) operon in response to exogenous pyrimidines. Functionally, also displays a weak uracil phosphoribosyltransferase activity which is not physiologically significant. The chain is Bifunctional protein PyrR from Akkermansia muciniphila (strain ATCC BAA-835 / DSM 22959 / JCM 33894 / BCRC 81048 / CCUG 64013 / CIP 107961 / Muc).